A 245-amino-acid polypeptide reads, in one-letter code: Biosynthetic peptidoglycan transglycosylase (245 aa).

Residues Val20–Ala42 traverse the membrane as a helical segment.

Belongs to the glycosyltransferase 51 family.

The protein localises to the cell inner membrane. The catalysed reaction is [GlcNAc-(1-&gt;4)-Mur2Ac(oyl-L-Ala-gamma-D-Glu-L-Lys-D-Ala-D-Ala)](n)-di-trans,octa-cis-undecaprenyl diphosphate + beta-D-GlcNAc-(1-&gt;4)-Mur2Ac(oyl-L-Ala-gamma-D-Glu-L-Lys-D-Ala-D-Ala)-di-trans,octa-cis-undecaprenyl diphosphate = [GlcNAc-(1-&gt;4)-Mur2Ac(oyl-L-Ala-gamma-D-Glu-L-Lys-D-Ala-D-Ala)](n+1)-di-trans,octa-cis-undecaprenyl diphosphate + di-trans,octa-cis-undecaprenyl diphosphate + H(+). The protein operates within cell wall biogenesis; peptidoglycan biosynthesis. Peptidoglycan polymerase that catalyzes glycan chain elongation from lipid-linked precursors. The sequence is that of Biosynthetic peptidoglycan transglycosylase from Burkholderia lata (strain ATCC 17760 / DSM 23089 / LMG 22485 / NCIMB 9086 / R18194 / 383).